The primary structure comprises 212 residues: MIVIFLGPPGAGKGTQGKKIAKKIDLPHIALGDIFRTIIKTSTSEAELINNYVKQGELVPNAIVNQVIKNFLLSSAYKNGYILDGYPRNLEQAKFFESFIKEKIKIIYFDVSDELLIKRVLGRYSCKNCRKIYNSYFLQPKTDNVCDVCGSSTFDYRKDDNEEVVKKRIEVYKTETYPLIDYYKNSGNFYLVNGSKNEQEIEIDIQKILKIN.

ATP is bound at residue 10-15; that stretch reads GAGKGT. The NMP stretch occupies residues 30 to 59; sequence ALGDIFRTIIKTSTSEAELINNYVKQGELV. AMP is bound by residues R36, 57-59, 85-88, and Q92; these read ELV and GYPR. The segment at 122–160 is LID; the sequence is GRYSCKNCRKIYNSYFLQPKTDNVCDVCGSSTFDYRKDD. R123 contributes to the ATP binding site. Positions 126 and 129 each coordinate Zn(2+). 132 to 133 contributes to the ATP binding site; the sequence is IY. Residues C146 and C149 each contribute to the Zn(2+) site. AMP contacts are provided by R157 and R168. K196 is a binding site for ATP.

The protein belongs to the adenylate kinase family. Monomer.

The protein resides in the cytoplasm. It catalyses the reaction AMP + ATP = 2 ADP. Its pathway is purine metabolism; AMP biosynthesis via salvage pathway; AMP from ADP: step 1/1. Its function is as follows. Catalyzes the reversible transfer of the terminal phosphate group between ATP and AMP. Plays an important role in cellular energy homeostasis and in adenine nucleotide metabolism. This chain is Adenylate kinase, found in Rickettsia akari (strain Hartford).